Reading from the N-terminus, the 380-residue chain is Cytochrome b (380 aa).

4 consecutive transmembrane segments (helical) span residues 34–54 (FGSL…LLAM), 78–99 (WLIR…YLHI), 114–134 (WNTG…GYVL), and 179–199 (FFAL…IHLT). 2 residues coordinate heme b: His-84 and His-98. The heme b site is built by His-183 and His-197. Residue His-202 coordinates a ubiquinone. The next 4 helical transmembrane spans lie at 227 to 247 (LKDI…ALFS), 289 to 309 (LGGV…PLLH), 321 to 341 (LSQL…WIGS), and 348 to 368 (FIII…VLFP).

Belongs to the cytochrome b family. The cytochrome bc1 complex contains 11 subunits: 3 respiratory subunits (MT-CYB, CYC1 and UQCRFS1), 2 core proteins (UQCRC1 and UQCRC2) and 6 low-molecular weight proteins (UQCRH/QCR6, UQCRB/QCR7, UQCRQ/QCR8, UQCR10/QCR9, UQCR11/QCR10 and a cleavage product of UQCRFS1). This cytochrome bc1 complex then forms a dimer. The cofactor is heme b.

The protein resides in the mitochondrion inner membrane. Functionally, component of the ubiquinol-cytochrome c reductase complex (complex III or cytochrome b-c1 complex) that is part of the mitochondrial respiratory chain. The b-c1 complex mediates electron transfer from ubiquinol to cytochrome c. Contributes to the generation of a proton gradient across the mitochondrial membrane that is then used for ATP synthesis. This chain is Cytochrome b (MT-CYB), found in Oceanodroma melania (Black storm-petrel).